A 692-amino-acid polypeptide reads, in one-letter code: Elongation factor G (692 aa).

A tr-type G domain is found at 8–282 (AKTRNIGIMA…AVIAYLPSPL (275 aa)). GTP-binding positions include 17–24 (AHVDAGKT), 81–85 (DTPGH), and 135–138 (NKMD).

The protein belongs to the TRAFAC class translation factor GTPase superfamily. Classic translation factor GTPase family. EF-G/EF-2 subfamily.

The protein resides in the cytoplasm. Its function is as follows. Catalyzes the GTP-dependent ribosomal translocation step during translation elongation. During this step, the ribosome changes from the pre-translocational (PRE) to the post-translocational (POST) state as the newly formed A-site-bound peptidyl-tRNA and P-site-bound deacylated tRNA move to the P and E sites, respectively. Catalyzes the coordinated movement of the two tRNA molecules, the mRNA and conformational changes in the ribosome. The chain is Elongation factor G from Streptococcus equi subsp. zooepidemicus (strain MGCS10565).